We begin with the raw amino-acid sequence, 417 residues long: NADH-quinone oxidoreductase subunit D (417 aa).

Belongs to the complex I 49 kDa subunit family. As to quaternary structure, NDH-1 is composed of 14 different subunits. Subunits NuoB, C, D, E, F, and G constitute the peripheral sector of the complex.

The protein resides in the cell inner membrane. It catalyses the reaction a quinone + NADH + 5 H(+)(in) = a quinol + NAD(+) + 4 H(+)(out). Functionally, NDH-1 shuttles electrons from NADH, via FMN and iron-sulfur (Fe-S) centers, to quinones in the respiratory chain. The immediate electron acceptor for the enzyme in this species is believed to be ubiquinone. Couples the redox reaction to proton translocation (for every two electrons transferred, four hydrogen ions are translocated across the cytoplasmic membrane), and thus conserves the redox energy in a proton gradient. The chain is NADH-quinone oxidoreductase subunit D from Nitrosococcus oceani (strain ATCC 19707 / BCRC 17464 / JCM 30415 / NCIMB 11848 / C-107).